Reading from the N-terminus, the 429-residue chain is Glutamate-1-semialdehyde 2,1-aminomutase 2 (429 aa).

Lys268 is subject to N6-(pyridoxal phosphate)lysine.

It belongs to the class-III pyridoxal-phosphate-dependent aminotransferase family. HemL subfamily. As to quaternary structure, homodimer. The cofactor is pyridoxal 5'-phosphate.

It localises to the cytoplasm. It catalyses the reaction (S)-4-amino-5-oxopentanoate = 5-aminolevulinate. The protein operates within porphyrin-containing compound metabolism; protoporphyrin-IX biosynthesis; 5-aminolevulinate from L-glutamyl-tRNA(Glu): step 2/2. This chain is Glutamate-1-semialdehyde 2,1-aminomutase 2, found in Staphylococcus aureus (strain Mu50 / ATCC 700699).